We begin with the raw amino-acid sequence, 449 residues long: Aminopeptidase C (449 aa).

Residues C70, H364, and N385 contribute to the active site.

Belongs to the peptidase C1 family. As to quaternary structure, homohexamer.

Its subcellular location is the cytoplasm. The catalysed reaction is Inactivates bleomycin B2 (a cytotoxic glycometallopeptide) by hydrolysis of a carboxyamide bond of beta-aminoalanine, but also shows general aminopeptidase activity. The specificity varies somewhat with source, but amino acid arylamides of Met, Leu and Ala are preferred.. The protein is Aminopeptidase C (pepC) of Lactobacillus helveticus (Lactobacillus suntoryeus).